Reading from the N-terminus, the 532-residue chain is Fe-S cluster assembly factor HCF101, chloroplastic (532 aa).

A chloroplast-targeting transit peptide spans 1–61 (MPLLHPQSLR…RVSQNLSVAK (61 aa)). Ala62 is modified (N-acetylalanine). An ATP-binding site is contributed by 184 to 191 (CKGGVGKS).

This sequence belongs to the Mrp/NBP35 ATP-binding proteins family. [4Fe-4S] cluster is required as a cofactor. As to expression, expressed in aerial tissues exposed to light. Very low expression in roots.

It is found in the plastid. The protein localises to the chloroplast stroma. Functionally, required for photosystem I (PSI) biosynthesis and assembly. May serve as a chloroplast scaffold protein that specifically assembles iron-sulfur (4Fe-4S) clusters and transfers them to the chloroplast PSI and ferredoxin-thioredoxin (FTR) complexes. Can assemble a 4Fe-4S cluster and transfer it to apoproteins in yeast cells. Probably not required for assembly or stability of plastidic 2Fe-2S clusters. The polypeptide is Fe-S cluster assembly factor HCF101, chloroplastic (HCF101) (Arabidopsis thaliana (Mouse-ear cress)).